A 396-amino-acid chain; its full sequence is Tryptophan synthase beta chain (396 aa).

N6-(pyridoxal phosphate)lysine is present on Lys88.

This sequence belongs to the TrpB family. As to quaternary structure, tetramer of two alpha and two beta chains. Pyridoxal 5'-phosphate is required as a cofactor.

It catalyses the reaction (1S,2R)-1-C-(indol-3-yl)glycerol 3-phosphate + L-serine = D-glyceraldehyde 3-phosphate + L-tryptophan + H2O. The protein operates within amino-acid biosynthesis; L-tryptophan biosynthesis; L-tryptophan from chorismate: step 5/5. In terms of biological role, the beta subunit is responsible for the synthesis of L-tryptophan from indole and L-serine. This Shewanella putrefaciens (strain CN-32 / ATCC BAA-453) protein is Tryptophan synthase beta chain.